The following is a 349-amino-acid chain: Ribosomal RNA large subunit methyltransferase M (349 aa).

Residues Ser-183, Ala-216–Gly-219, Asp-235, Asp-255, and Asp-271 each bind S-adenosyl-L-methionine. Lys-300 (proton acceptor) is an active-site residue.

It belongs to the class I-like SAM-binding methyltransferase superfamily. RNA methyltransferase RlmE family. RlmM subfamily. In terms of assembly, monomer.

The protein localises to the cytoplasm. It carries out the reaction cytidine(2498) in 23S rRNA + S-adenosyl-L-methionine = 2'-O-methylcytidine(2498) in 23S rRNA + S-adenosyl-L-homocysteine + H(+). Catalyzes the 2'-O-methylation at nucleotide C2498 in 23S rRNA. This chain is Ribosomal RNA large subunit methyltransferase M, found in Stutzerimonas stutzeri (strain A1501) (Pseudomonas stutzeri).